Consider the following 361-residue polypeptide: Septin-1 (361 aa).

The region spanning 32–304 is the Septin-type G domain; sequence KGFEFTLMVV…ENYRSDRLAK (273 aa). Positions 42–49 are G1 motif; sequence GESGLGKS. Residues 42 to 49, Thr-76, Gly-102, 181 to 189, Gly-239, and Arg-254 each bind GTP; these read GESGLGKS and KADCLTKKE. The G3 motif stretch occupies residues 99 to 102; it reads DTPG. Residues 180 to 183 are G4 motif; sequence AKAD. Position 319 is a phosphoserine (Ser-319).

It belongs to the TRAFAC class TrmE-Era-EngA-EngB-Septin-like GTPase superfamily. Septin GTPase family. As to quaternary structure, likely part of a multicomponent septin complex that includes pnut. Interacts with pnut. Interacts with park. In terms of processing, ubiquitinated by park, leading to its degradation by the proteasome. As to expression, accumulates at the leading edge of the cleavage furrow in dividing cells and cellularizing embryos (at protein level). Also accumulates at the leading edge of the embryo epithelium during dorsal closure, in the embryonic neurons, and at the baso-lateral surfaces of ovarian follicle cells (at protein level).

Its subcellular location is the cytoplasm. Involved in cytokinesis. May be involved in p53-dependent apoptosis. The sequence is that of Septin-1 from Drosophila melanogaster (Fruit fly).